Here is a 429-residue protein sequence, read N- to C-terminus: Serum response factor-binding protein 1 (429 aa).

Residue Ala2 is modified to N-acetylalanine. Coiled-coil stretches lie at residues 42-67 (KGTEDALLKNQRRAQRLLEEIHAMKE) and 108-146 (LLKKKIDVLKAAVQAFKEARQNVAEVESSKNASEDNHSE). Disordered stretches follow at residues 131-157 (AEVESSKNASEDNHSENTLYSNDNGSN) and 176-429 (LAKK…TFDD). Polar residues predominate over residues 146-157 (ENTLYSNDNGSN). The span at 183-195 (NSKEKIAKMEHGP) shows a compositional bias: basic and acidic residues. Lys190 is covalently cross-linked (Glycyl lysine isopeptide (Lys-Gly) (interchain with G-Cter in SUMO2)). Phosphoserine is present on residues Ser203, Ser205, Ser264, Ser279, and Ser281. Residues 249-265 (GGEEFCEEEKEYFDDST) are compositionally biased toward acidic residues. The span at 296 to 341 (KESSCHSSVKEQKPLEKVFLKEDTGETHGDTRNDKIKPSTETRKLE) shows a compositional bias: basic and acidic residues. Lys316 participates in a covalent cross-link: Glycyl lysine isopeptide (Lys-Gly) (interchain with G-Cter in SUMO2). A phosphoserine mark is found at Ser349, Ser351, and Ser367. Residues 357–367 (NFKEQAPKTRS) show a composition bias toward basic and acidic residues. Residues 373 to 383 (NEPQIKNQFNK) show a composition bias toward polar residues.

As to quaternary structure, interacts with SRF. Forms complexes with SRF and SRF cofactors ARID2, MYOCD and NKX2-5. Interacts with the N-terminus of SLC2A4. Abundantly expressed in heart and skeletal muscle, and at much lower levels in brain and lung.

The protein resides in the cytoplasm. It localises to the perinuclear region. In terms of biological role, may be involved in regulating transcriptional activation of cardiac genes during the aging process. May play a role in biosynthesis and/or processing of SLC2A4 in adipose cells. The sequence is that of Serum response factor-binding protein 1 from Homo sapiens (Human).